Reading from the N-terminus, the 440-residue chain is MKKFSVVIAGGGSTFTPGIVLMLLANQDRFPLRSLKFYDNDGARQETIAEACKVILKEQAPEIEFSYTTDPQAAFTDVDFVMAHIRVGKYPMREQDEKIPLRHGVLGQETCGPGGIAYGMRSIGGVLELVDYMEKYSPNAWMLNYSNPAAIVAEATRRLRPNAKILNICDMPIGIEGRMAQIVGLKDRKQMRVRYYGLNHFGWWTSIEDLDGNDLMPKLREYVAKYGYVPPSNDPHTEASWNDTFAKAKDVQALDPQTMPNTYLKYYLFPDYVVAHSNPERTRANEVMDHREKNVFSACRAIIAAGKSTAGDLEIDEHASYIVDLATAIAFNTQERMLLIVPNNGAIHNFDADAMVEIPCLVGHNGPEPLTVGDIPHFQKGLMSQQVAVEKLVVDAWEQRSYHKLWQAITLSKTVPSASVAKAILDDLIAANKDYWPELH.

4–70 is an NAD(+) binding site; the sequence is FSVVIAGGGS…PEIEFSYTTD (67 aa). 2 residues coordinate substrate: arginine 93 and asparagine 147. Mn(2+) is bound at residue cysteine 169. The Proton donor role is filled by aspartate 170. Histidine 200 is a binding site for Mn(2+). The Proton acceptor role is filled by tyrosine 263. Arginine 283 is a substrate binding site.

As to quaternary structure, homodimer. It depends on NAD(+) as a cofactor. Requires Mn(2+) as cofactor. Co(2+) is required as a cofactor. The cofactor is Ni(2+).

It carries out the reaction alpha-maltose 6'-phosphate + H2O = D-glucose 6-phosphate + D-glucose. Its pathway is glycan biosynthesis; sucrose metabolism. In terms of biological role, is involved in the catabolism of alpha-glycosides accumulated via a phosphoenolpyruvate-dependent phosphotransferase system (PEP-PTS). Hydrolyzes a wide variety of 6-phospho-alpha-D-glucosides including maltose-6'-phosphate, isomaltose-6'-phosphate, maltitol-6-phosphate, trehalose-6-phosphate and the 6'-phosphorylated derivatives of the five linkage-isomeric alpha-D-glucosyl-D-fructoses: trehalulose-6'-phosphate, turanose-6'-phosphate, maltulose-6'-phosphate, leucrose-6'-phosphate, and palatinose-6'-phosphate. However, sucrose-6-phosphate is not a substrate for this enzyme. This chain is 6-phospho-alpha-glucosidase, found in Klebsiella pneumoniae.